The chain runs to 355 residues: 45 kDa calcium-binding protein (355 aa).

An N-terminal signal peptide occupies residues Met-1–Ala-29. Asn-33 carries N-linked (GlcNAc...) asparagine glycosylation. 2 EF-hand domains span residues Lys-91–Glu-126 and Glu-130–His-165. Position 92 is a phosphoserine (Ser-92). 10 residues coordinate Ca(2+): Asp-104, Asn-106, Asp-108, Arg-110, Glu-115, Asp-143, Asp-145, Asp-147, His-149, and Glu-154. A phosphothreonine mark is found at Thr-186 and Thr-210. 3 EF-hand domains span residues Met-226–Asn-261, Trp-271–Phe-306, and Ser-307–Ser-342. Ca(2+) contacts are provided by Asp-239, Asp-241, Asp-243, Lys-245, and Glu-250. A Phosphothreonine modification is found at Thr-258. Residues Asp-284, Asn-286, and Asp-288 each coordinate Ca(2+). Thr-292 carries the phosphothreonine modification. Ca(2+) contacts are provided by Glu-295, Asp-320, Asn-322, Asn-324, Tyr-326, and Glu-331. A necessary for intracellular retention in Golgi apparatus lumen region spans residues Pro-302–Phe-355.

The protein belongs to the CREC family.

It localises to the golgi apparatus lumen. In terms of biological role, may regulate calcium-dependent activities in the endoplasmic reticulum lumen or post-ER compartment. The chain is 45 kDa calcium-binding protein (SDF4) from Bos taurus (Bovine).